The primary structure comprises 462 residues: ATP synthase subunit beta (462 aa).

An ATP-binding site is contributed by 150–157 (GGAGVGKT).

Belongs to the ATPase alpha/beta chains family. As to quaternary structure, F-type ATPases have 2 components, CF(1) - the catalytic core - and CF(0) - the membrane proton channel. CF(1) has five subunits: alpha(3), beta(3), gamma(1), delta(1), epsilon(1). CF(0) has three main subunits: a(1), b(2) and c(9-12). The alpha and beta chains form an alternating ring which encloses part of the gamma chain. CF(1) is attached to CF(0) by a central stalk formed by the gamma and epsilon chains, while a peripheral stalk is formed by the delta and b chains. In this bacterium the a and b subunits are transcribed but do not seem to be translated, thus the ATP synthase consists of the alpha, beta, gamma, delta, epsilon and c subunits.

It localises to the cell membrane. It catalyses the reaction ATP + H2O + 4 H(+)(in) = ADP + phosphate + 5 H(+)(out). Produces ATP from ADP in the presence of a proton gradient across the membrane. The catalytic sites are hosted primarily by the beta subunits. This is ATP synthase subunit beta from Moorella thermoacetica (strain ATCC 39073 / JCM 9320).